The following is a 412-amino-acid chain: Argininosuccinate synthase (412 aa).

ATP-binding positions include 15–23 and alanine 42; that span reads AYSGGLDTS. 2 residues coordinate L-citrulline: tyrosine 93 and serine 98. Position 123 (glycine 123) interacts with ATP. L-aspartate is bound by residues threonine 125, asparagine 129, and aspartate 130. Asparagine 129 is an L-citrulline binding site. 5 residues coordinate L-citrulline: arginine 133, serine 185, serine 194, glutamate 270, and tyrosine 282.

Belongs to the argininosuccinate synthase family. Type 1 subfamily. In terms of assembly, homotetramer.

It localises to the cytoplasm. The enzyme catalyses L-citrulline + L-aspartate + ATP = 2-(N(omega)-L-arginino)succinate + AMP + diphosphate + H(+). It participates in amino-acid biosynthesis; L-arginine biosynthesis; L-arginine from L-ornithine and carbamoyl phosphate: step 2/3. The chain is Argininosuccinate synthase from Psychrobacter cryohalolentis (strain ATCC BAA-1226 / DSM 17306 / VKM B-2378 / K5).